Here is a 444-residue protein sequence, read N- to C-terminus: 3-phosphoshikimate 1-carboxyvinyltransferase (444 aa).

3 residues coordinate 3-phosphoshikimate: K24, S25, and R29. Residue K24 coordinates phosphoenolpyruvate. G97 and R125 together coordinate phosphoenolpyruvate. Residues S170, Q172, D318, and K345 each coordinate 3-phosphoshikimate. Q172 lines the phosphoenolpyruvate pocket. Residue D318 is the Proton acceptor of the active site. Positions 349 and 391 each coordinate phosphoenolpyruvate.

It belongs to the EPSP synthase family. As to quaternary structure, monomer.

The protein localises to the cytoplasm. It carries out the reaction 3-phosphoshikimate + phosphoenolpyruvate = 5-O-(1-carboxyvinyl)-3-phosphoshikimate + phosphate. It participates in metabolic intermediate biosynthesis; chorismate biosynthesis; chorismate from D-erythrose 4-phosphate and phosphoenolpyruvate: step 6/7. Functionally, catalyzes the transfer of the enolpyruvyl moiety of phosphoenolpyruvate (PEP) to the 5-hydroxyl of shikimate-3-phosphate (S3P) to produce enolpyruvyl shikimate-3-phosphate and inorganic phosphate. This chain is 3-phosphoshikimate 1-carboxyvinyltransferase, found in Halorhodospira halophila (strain DSM 244 / SL1) (Ectothiorhodospira halophila (strain DSM 244 / SL1)).